The following is a 505-amino-acid chain: MITLTGHTLTIEEMKRLLLEGEGVTACPNSMQKVAECREVVEKIVEDGKVVYGITTGFGKFSDVLIQKDDVKALQHNLIQSHACGIGDPFPEEVSRGMLILRANTMLKGVSGVRPLVVNMLLEFVNRKIHPVVPQQGSLGASGDLAPLSHLALVLLGEGEVFYKGKRVHAMVALTEEGLEPIELEAKEGLALINGTQAMTAQGVLSYIEAEATSYQAELIASMTIEGLQGIIDAFDENVHKTRGYKEQVEVASRIRDILHDSKLTTKQGELRVQDAYSLRCIPQVHGASWQVLNYVKEKLEIEMNAATDNPLIFDGGEKVISGGNFHGQPIAFAMDFLKVGMAELANISERRIERLVNPQLNDLPPFLSPEPGLQSGAMIMQYAAASLVSENKTLAHPASVDSIPSSANQEDHVSMGTIASRHAHQIIQNVRRVLSVEMICAMQAAEYRGIENMSTVTKSFYHQGRQQVPSITNDRIFSTDIENITHWLKTNYSIKERLDVNAAL.

A cross-link (5-imidazolinone (Ala-Gly)) is located at residues 141-143; the sequence is ASG. Residue S142 is modified to 2,3-didehydroalanine (Ser).

It belongs to the PAL/histidase family. Post-translationally, contains an active site 4-methylidene-imidazol-5-one (MIO), which is formed autocatalytically by cyclization and dehydration of residues Ala-Ser-Gly.

The protein resides in the cytoplasm. The enzyme catalyses L-histidine = trans-urocanate + NH4(+). It functions in the pathway amino-acid degradation; L-histidine degradation into L-glutamate; N-formimidoyl-L-glutamate from L-histidine: step 1/3. In Bacillus thuringiensis (strain Al Hakam), this protein is Histidine ammonia-lyase.